The primary structure comprises 451 residues: Serine/threonine-protein phosphatase 2A 55 kDa regulatory subunit B delta isoform (451 aa).

WD repeat units lie at residues 30 to 69 (AEAD…KSRP), 95 to 136 (EIEE…KRAE), 179 to 217 (AHTY…RSFN), 228 to 268 (ELTE…LCDR), 287 to 325 (EIIS…RPVE), 342 to 383 (ENDC…DITL), and 418 to 451 (DFNK…DKIN).

The protein belongs to the phosphatase 2A regulatory subunit B family. PP2A consists of a common heterodimeric core enzyme, composed of a 36 kDa catalytic subunit (subunit C) and a 65 kDa constant regulatory subunit (PR65 or subunit A), that associates with a variety of regulatory subunits.

Its subcellular location is the cytoplasm. Its function is as follows. Substrate-recognition subunit of protein phosphatase 2A (PP2A) that plays a key role in cell cycle by controlling mitosis entry and exit. The activity of PP2A complexes containing PPP2R2D (PR55-delta) fluctuate during the cell cycle: the activity is high in interphase and low in mitosis. The sequence is that of Serine/threonine-protein phosphatase 2A 55 kDa regulatory subunit B delta isoform (PPP2R2D) from Gallus gallus (Chicken).